A 247-amino-acid polypeptide reads, in one-letter code: ATP synthase subunit a, chloroplastic (247 aa).

5 consecutive transmembrane segments (helical) span residues 38–58 (QVLI…ILVV), 95–115 (VPFI…GALL), 134–154 (INTT…AGIS), 199–219 (LVVV…VMFL), and 220–240 (GLFT…AYIG).

This sequence belongs to the ATPase A chain family. As to quaternary structure, F-type ATPases have 2 components, CF(1) - the catalytic core - and CF(0) - the membrane proton channel. CF(1) has five subunits: alpha(3), beta(3), gamma(1), delta(1), epsilon(1). CF(0) has four main subunits: a, b, b' and c.

The protein localises to the plastid. It localises to the chloroplast thylakoid membrane. Functionally, key component of the proton channel; it plays a direct role in the translocation of protons across the membrane. The protein is ATP synthase subunit a, chloroplastic of Cicer arietinum (Chickpea).